The chain runs to 310 residues: Sporozoite surface protein P36 (310 aa).

Positions 1-24 (MRKALYSLLFYMCICLYIYTPVFM) are cleaved as a signal peptide. 6-Cys domains lie at 25–157 (ANLK…IKKT) and 168–309 (YIKG…STKA). 6 cysteine pairs are disulfide-bonded: cysteine 38/cysteine 48, cysteine 62/cysteine 137, cysteine 80/cysteine 135, cysteine 172/cysteine 196, cysteine 210/cysteine 291, and cysteine 227/cysteine 289. 3 N-linked (GlcNAc...) asparagine glycosylation sites follow: asparagine 72, asparagine 114, and asparagine 118. A glycan (N-linked (GlcNAc...) asparagine) is linked at asparagine 290.

The protein resides in the cell surface. Its subcellular location is the cell membrane. Its function is as follows. Involved in sporozoite infection of hepatocytes and replication therein. The protein is Sporozoite surface protein P36 (P36) of Plasmodium yoelii yoelii.